We begin with the raw amino-acid sequence, 274 residues long: tRNA pseudouridine synthase A (274 aa).

Aspartate 57 (nucleophile) is an active-site residue. Position 115 (tyrosine 115) interacts with substrate.

Belongs to the tRNA pseudouridine synthase TruA family. Homodimer.

The enzyme catalyses uridine(38/39/40) in tRNA = pseudouridine(38/39/40) in tRNA. Formation of pseudouridine at positions 38, 39 and 40 in the anticodon stem and loop of transfer RNAs. In Frankia casuarinae (strain DSM 45818 / CECT 9043 / HFP020203 / CcI3), this protein is tRNA pseudouridine synthase A.